The following is a 937-amino-acid chain: Periplasmic nitrate reductase (937 aa).

The segment at residues 1 to 31 (MSMNRREFLKTTAAAAAASAVGISIPSEAKA) is a signal peptide (tat-type signal). A 4Fe-4S Mo/W bis-MGD-type domain is found at 40–96 (WQWDKAVCRFCGTGCGIMVAVKDDKIVAVKGDPESPVNRGINCIKGYFNAKIMYGAD). The [4Fe-4S] cluster site is built by Cys-47, Cys-50, Cys-54, and Cys-82. Mo-bis(molybdopterin guanine dinucleotide) contacts are provided by residues Lys-84, Gln-152, Asn-177, Cys-181, 214–221 (WGANMAEM), Met-422, Gln-426, Asn-532, Lys-580, Asp-607, and 827–836 (TGRVLEHWHS). Trp-903 provides a ligand contact to substrate. Asn-911 and Lys-928 together coordinate Mo-bis(molybdopterin guanine dinucleotide).

Belongs to the prokaryotic molybdopterin-containing oxidoreductase family. NasA/NapA/NarB subfamily. As to quaternary structure, component of the periplasmic nitrate reductase NapAB complex composed of NapA and NapB. The cofactor is [4Fe-4S] cluster. Mo-bis(molybdopterin guanine dinucleotide) is required as a cofactor. Predicted to be exported by the Tat system. The position of the signal peptide cleavage has not been experimentally proven.

The protein resides in the periplasm. The catalysed reaction is 2 Fe(II)-[cytochrome] + nitrate + 2 H(+) = 2 Fe(III)-[cytochrome] + nitrite + H2O. Its function is as follows. Catalytic subunit of the periplasmic nitrate reductase complex NapAB. Receives electrons from NapB and catalyzes the reduction of nitrate to nitrite. This Nautilia profundicola (strain ATCC BAA-1463 / DSM 18972 / AmH) protein is Periplasmic nitrate reductase.